Reading from the N-terminus, the 181-residue chain is Small ribosomal subunit protein uS4 (181 aa).

The 73-residue stretch at 108 to 180 folds into the S4 RNA-binding domain; sequence RRLQTIVYRK…GERQRIMNQR (73 aa).

This sequence belongs to the universal ribosomal protein uS4 family. As to quaternary structure, part of the 30S ribosomal subunit. Contacts protein S5. The interaction surface between S4 and S5 is involved in control of translational fidelity.

Functionally, one of the primary rRNA binding proteins, it binds directly to 16S rRNA where it nucleates assembly of the body of the 30S subunit. Its function is as follows. With S5 and S12 plays an important role in translational accuracy. This is Small ribosomal subunit protein uS4 from Methanocorpusculum labreanum (strain ATCC 43576 / DSM 4855 / Z).